We begin with the raw amino-acid sequence, 533 residues long: 2,3-bisphosphoglycerate-independent phosphoglycerate mutase (533 aa).

The Mn(2+) site is built by Asp15 and Ser65. The active-site Phosphoserine intermediate is the Ser65. Substrate is bound by residues His126, 156–157 (RD), Arg188, Arg194, 258–261 (RPDR), and Lys331. Asp398, His402, Asp439, His440, and His457 together coordinate Mn(2+).

Belongs to the BPG-independent phosphoglycerate mutase family. In terms of assembly, monomer. Mn(2+) is required as a cofactor.

It carries out the reaction (2R)-2-phosphoglycerate = (2R)-3-phosphoglycerate. It functions in the pathway carbohydrate degradation; glycolysis; pyruvate from D-glyceraldehyde 3-phosphate: step 3/5. Catalyzes the interconversion of 2-phosphoglycerate and 3-phosphoglycerate. In Trichormus variabilis (strain ATCC 29413 / PCC 7937) (Anabaena variabilis), this protein is 2,3-bisphosphoglycerate-independent phosphoglycerate mutase.